A 327-amino-acid polypeptide reads, in one-letter code: Vacuolar protein sorting-associated protein 26A (327 aa).

The tract at residues Arg306 to Met327 is disordered. At Ser315 the chain carries Phosphoserine. Residues Pro316–Met327 are compositionally biased toward polar residues.

This sequence belongs to the VPS26 family. As to quaternary structure, component of the heterotrimeric retromer cargo-selective complex (CSC), also described as vacuolar protein sorting subcomplex (VPS), formed by VPS26 (VPS26A or VPS26B), VPS29 and VPS35. The CSC has a highly elongated structure with VPS26 and VPS29 binding independently at opposite distal ends of VPS35 as central platform. The CSC is believed to associate with variable sorting nexins to form functionally distinct retromer complex variants. The originally described retromer complex (also called SNX-BAR retromer) is a pentamer containing the CSC and a heterodimeric membrane-deforming subcomplex formed between SNX1 or SNX2 and SNX5 or SNX6 (also called SNX-BAR subcomplex); the respective CSC and SNX-BAR subcomplexes associate with low affinity. The CSC associates with SNX3 to form a SNX3-retromer complex. The CSC associates with SNX27, the WASH complex and the SNX-BAR subcomplex to form the SNX27-retromer complex. Interacts with VPS29, VPS35, SNX1, SNX2, SNX5, SNX6, SNX3, SNX27, RAB7A, ECPAS, EHD1, WASHC5, SORL1.

The protein localises to the cytoplasm. It is found in the endosome membrane. It localises to the early endosome. Functionally, acts as a component of the retromer cargo-selective complex (CSC). The CSC is believed to be the core functional component of retromer or respective retromer complex variants acting to prevent missorting of selected transmembrane cargo proteins into the lysosomal degradation pathway. The recruitment of the CSC to the endosomal membrane involves RAB7A and SNX3. The SNX-BAR retromer mediates retrograde transport of cargo proteins from endosomes to the trans-Golgi network (TGN) and is involved in endosome-to-plasma membrane transport for cargo protein recycling. The SNX3-retromer mediates the retrograde endosome-to-TGN transport of WLS distinct from the SNX-BAR retromer pathway. The SNX27-retromer is believed to be involved in endosome-to-plasma membrane trafficking and recycling of a broad spectrum of cargo proteins. The CSC seems to act as recruitment hub for other proteins, such as the WASH complex and TBC1D5. Required for retrograde transport of lysosomal enzyme receptor IGF2R. Required to regulate transcytosis of the polymeric immunoglobulin receptor (pIgR-pIgA). Required for the endosomal localization of WASHC2A (indicative for the WASH complex). Required for the endosomal localization of TBC1D5. Mediates retromer cargo recognition of SORL1 and is involved in trafficking of SORL1 implicated in sorting and processing of APP. Involved in retromer-independent lysosomal sorting of F2R. Involved in recycling of ADRB2. Enhances the affinity of SNX27 for PDZ-binding motifs in cargo proteins. This Homo sapiens (Human) protein is Vacuolar protein sorting-associated protein 26A.